We begin with the raw amino-acid sequence, 131 residues long: Protein FON2 SPARE1 (131 aa).

The first 22 residues, 1 to 22 (MSRRLGAAAAVLLLWLAVLTFA), serve as a signal peptide directing secretion. A disordered region spans residues 67–131 (SPSSLTTTDR…VPTGPNPLHH (65 aa)). A compositionally biased stretch (basic residues) spans 76–97 (RHHHHHRHHGHHHHRGHDRWNR).

It belongs to the CLV3/ESR signal peptide family. As to expression, expressed in all aerial apical meristems, including the floral and inflorescence meristems in the reproductive phase and the shoot apical meristem in the vegetative phase. Also detected in the primordia of lateral organs such as the leaf and the floral organs.

Its subcellular location is the secreted. Involved in the maintenance of the floral meristem and of the shoot apical meristem in the vegetative phase. Suppresses the fon2 mutation and acts independently of FON1. In Oryza sativa subsp. japonica, the protein has a single amino acid substitution at the putative processing site of the signal peptide and is inactive. This chain is Protein FON2 SPARE1 (FOS1), found in Oryza sativa subsp. indica (Rice).